A 526-amino-acid polypeptide reads, in one-letter code: MRNALFLIFISLCSVCKSSAQGYSNPVIPGFHPDPSVCKAGDDYYLVNSSFQYFPGVPLFHSKDLVHWEQIGNCLTRPSQLDLTNANSGSGIFAPTIRYNDGVFYMITTNVSGKGNFLVHTTDPRSEWSEPVWLEQGGIDPSLYFEDGKCFMVSNPDGYINLCEIDPMTGKQLSSSKRIWNGTGGRYAEGPHIYKKDGWYYLLISEGGTELGHKVTIARSRYIDGPYQGNPANPILTHANESGQSSPIQGTGHADLVEGTDGSWWMVCLAYRIMPGTHHTLGRETYLAPVRWDKDAWPVVNSNGTISLKMDVPTLPQQEMKGRPERIDFKEGKLSPEWIHLQNPEAKNYIFTKDGKLRLIATPVTLSDWKSPTFVALRQEHFDMEASAPVVLQKAGVNDEAGISVFMEFHSHYDLFVRQDKDRKRSVGLRYKLGEITHYAKEVSLPTDGEVELVVKSDINYYYFGYKVNGIYHDLGKMNTRYLSTETAGGFTGVVLGLYITSASKDSKAYADFEYFKYKGKPGENK.

A signal peptide spans 1–20; it reads MRNALFLIFISLCSVCKSSA. Asp-34 (proton acceptor) is an active-site residue. The Proton donor role is filled by Glu-189.

Belongs to the glycosyl hydrolase 43 family.

The protein resides in the periplasm. The catalysed reaction is Hydrolysis of terminal non-reducing alpha-L-arabinofuranoside residues in alpha-L-arabinosides.. It participates in glucan metabolism; xyloglucan degradation. Alpha-L-arabinofuranosidase involved in xyloglucan degradation by mediating the cleavage of terminal non-reducing alpha-L-arabinofuranoside residues in xyloglucan branches, converting the 'S' units to 'X' units. This chain is Non-reducing end alpha-L-arabinofuranosidase BoGH43A, found in Bacteroides ovatus (strain ATCC 8483 / DSM 1896 / JCM 5824 / BCRC 10623 / CCUG 4943 / NCTC 11153).